Here is a 465-residue protein sequence, read N- to C-terminus: Probable Xaa-Pro aminopeptidase PEPP (465 aa).

Mn(2+) is bound by residues Asp-259, Asp-270, Glu-395, and Glu-435.

Belongs to the peptidase M24B family. Mn(2+) serves as cofactor.

It catalyses the reaction Release of any N-terminal amino acid, including proline, that is linked to proline, even from a dipeptide or tripeptide.. Functionally, catalyzes the removal of a penultimate prolyl residue from the N-termini of peptides. This chain is Probable Xaa-Pro aminopeptidase PEPP (PEPP), found in Pyricularia oryzae (strain 70-15 / ATCC MYA-4617 / FGSC 8958) (Rice blast fungus).